Consider the following 505-residue polypeptide: Trans-cinnamate 4-monooxygenase (505 aa).

A helical transmembrane segment spans residues 3 to 23; it reads LLLLEKTLLGSFVAVLVAILV. (E)-cinnamate-binding positions include 213–218 and alanine 306; that span reads RSRLAQ. Position 447 (cysteine 447) interacts with heme.

Belongs to the cytochrome P450 family. The cofactor is heme.

It localises to the membrane. The enzyme catalyses (E)-cinnamate + reduced [NADPH--hemoprotein reductase] + O2 = (E)-4-coumarate + oxidized [NADPH--hemoprotein reductase] + H2O + H(+). It functions in the pathway phenylpropanoid metabolism; trans-4-coumarate biosynthesis; trans-4-coumarate from trans-cinnamate: step 1/1. Its function is as follows. Catalyzes the first oxidative step of the phenylpropanoid pathway in higher plants by transforming trans-cinnamate into p-coumarate. The compounds formed by this pathway are essential components for lignification, pollination, and defense against ultraviolet light, predators and pathogens. The protein is Trans-cinnamate 4-monooxygenase (CYP73A16) of Populus kitakamiensis (Aspen).